Here is a 288-residue protein sequence, read N- to C-terminus: Proteasome assembly chaperone 1 (288 aa).

Alanine 2 carries the post-translational modification N-acetylalanine. The disordered stretch occupies residues 12 to 38; it reads TPCRAGTEEEEEEEDGNRETPEDREVR. Threonine 18 is subject to Phosphothreonine. A compositionally biased stretch (basic and acidic residues) spans 28 to 38; the sequence is NRETPEDREVR. A Phosphothreonine modification is found at threonine 54. Serine 180 is modified (phosphoserine). Lysine 264 carries the post-translational modification N6-acetyllysine.

It belongs to the PSMG1 family. As to quaternary structure, forms a heterodimer with PSMG2. The PSMG1-PSMG2 heterodimer interacts directly with the PSMA5 and PSMA7 proteasome alpha subunits. In terms of processing, degraded by the proteasome upon completion of 20S proteasome maturation.

It is found in the cytoplasm. The protein localises to the endoplasmic reticulum. In terms of biological role, chaperone protein which promotes assembly of the 20S proteasome as part of a heterodimer with PSMG2. The PSMG1-PSMG2 heterodimer binds to the PSMA5 and PSMA7 proteasome subunits, promotes assembly of the proteasome alpha subunits into the heteroheptameric alpha ring and prevents alpha ring dimerization. The chain is Proteasome assembly chaperone 1 from Bos taurus (Bovine).